Reading from the N-terminus, the 338-residue chain is Probable family 20 transposase (338 aa).

Belongs to the transposase 20 family.

In terms of biological role, required for the transposition of an insertion element. This is Probable family 20 transposase from Pseudomonas aeruginosa (strain ATCC 15692 / DSM 22644 / CIP 104116 / JCM 14847 / LMG 12228 / 1C / PRS 101 / PAO1).